We begin with the raw amino-acid sequence, 1011 residues long: Ankyrin repeat domain-containing protein 18B (1011 aa).

ANK repeat units follow at residues 67-96 (KDRTVLHLACAHGRVQVVTLLLDRKCQINI), 100-129 (LNRTPLMKAVHCQEEACAIILLKRGANPNI), 133-162 (YGNTALHYAVYNEGTSLAERLLSHHANIEA), 166-195 (EGNTPLLFAINSRRQHMVEFLLKNQANIHA), and 199-228 (FKRTALILAVQHNLSSIVTLLLQQNIHISS). 2 disordered regions span residues 264-330 (LRND…GKKK) and 533-554 (MHPNGEAKESQSIGKQNSSEER). Coiled-coil stretches lie at residues 277–319 (ENLK…ENKQ), 385–639 (NEEM…ELVD), 692–722 (ISLLNYTADQIRKKNRELEEEATGYKKCLEM), and 752–908 (FKKL…EAFA). Positions 280–293 (KKRKKRKKLKKRKE) are enriched in basic residues. Basic and acidic residues predominate over residues 294-319 (GAKAEHNLKVASEEKQERLERSENKQ).

This chain is Ankyrin repeat domain-containing protein 18B (ANKRD18B), found in Homo sapiens (Human).